Consider the following 128-residue polypeptide: Large-conductance mechanosensitive channel (128 aa).

The next 2 helical transmembrane spans lie at 10 to 30 and 76 to 96; these read FAMR…SAFG and GLFI…FMMI.

The protein belongs to the MscL family. As to quaternary structure, homopentamer.

The protein localises to the cell inner membrane. Functionally, channel that opens in response to stretch forces in the membrane lipid bilayer. May participate in the regulation of osmotic pressure changes within the cell. The chain is Large-conductance mechanosensitive channel from Haemophilus influenzae (strain 86-028NP).